A 600-amino-acid polypeptide reads, in one-letter code: Mitoguardin 1 (600 aa).

The next 2 helical transmembrane spans lie at Thr15–Ser32 and Pro38–Ala58. Residues Ser257 and Ser261 each carry the phosphoserine modification.

It belongs to the mitoguardin family. As to quaternary structure, homodimer and heterodimer; forms heterodimers with MIGA2. Interacts with PLD6/MitoPLD.

The protein resides in the mitochondrion outer membrane. Its function is as follows. Regulator of mitochondrial fusion. Acts by forming homo- and heterodimers at the mitochondrial outer membrane and facilitating the formation of PLD6/MitoPLD dimers. May act by regulating phospholipid metabolism via PLD6/MitoPLD. This is Mitoguardin 1 from Mus musculus (Mouse).